The chain runs to 188 residues: dTTP/UTP pyrophosphatase (188 aa).

D70 acts as the Proton acceptor in catalysis.

The protein belongs to the Maf family. YhdE subfamily. The cofactor is a divalent metal cation.

Its subcellular location is the cytoplasm. The enzyme catalyses dTTP + H2O = dTMP + diphosphate + H(+). The catalysed reaction is UTP + H2O = UMP + diphosphate + H(+). Functionally, nucleoside triphosphate pyrophosphatase that hydrolyzes dTTP and UTP. May have a dual role in cell division arrest and in preventing the incorporation of modified nucleotides into cellular nucleic acids. The protein is dTTP/UTP pyrophosphatase of Clostridium botulinum (strain Eklund 17B / Type B).